The sequence spans 427 residues: F-box protein At2g16450 (427 aa).

Residues 1 to 45 form the F-box domain; sequence MNPSPITIDLILEILSRLPAKSVRRFHCVSKRWASIFGSPYFKEL.

The protein is F-box protein At2g16450 of Arabidopsis thaliana (Mouse-ear cress).